The following is a 276-amino-acid chain: Large ribosomal subunit protein uL2 (276 aa).

Disordered stretches follow at residues 1-20 (MGIK…TTND) and 219-276 (TVRG…RRKK). A compositionally biased stretch (polar residues) spans 7 to 20 (NPTTNGRRNMTTND).

It belongs to the universal ribosomal protein uL2 family. Part of the 50S ribosomal subunit. Forms a bridge to the 30S subunit in the 70S ribosome.

Its function is as follows. One of the primary rRNA binding proteins. Required for association of the 30S and 50S subunits to form the 70S ribosome, for tRNA binding and peptide bond formation. It has been suggested to have peptidyltransferase activity; this is somewhat controversial. Makes several contacts with the 16S rRNA in the 70S ribosome. The sequence is that of Large ribosomal subunit protein uL2 from Bacillus mycoides (strain KBAB4) (Bacillus weihenstephanensis).